The primary structure comprises 427 residues: GPI mannosyltransferase 2 (427 aa).

Transmembrane regions (helical) follow at residues 7–27 (LTTVFFTVKLVQYLLVYFAPG), 119–139 (ATLLNLVLHYVSVWLLYALTL), 164–184 (FLLAPYSEPLSFAFSFLGMLL), 197–217 (ITLAWYNWLPYTLSGICFSVA), 247–267 (AVLFPCIAGSMMLGIFAYMHY), 318–338 (VPNFLFALPNLVILWYSTVYF), 350–370 (LVYITRALLLIITFFAHVQII), and 404–424 (LYVNWLILWIPLQTVLFACFL).

Belongs to the PIGV family.

It localises to the endoplasmic reticulum membrane. Its pathway is glycolipid biosynthesis; glycosylphosphatidylinositol-anchor biosynthesis. Mannosyltransferase involved in glycosylphosphatidylinositol-anchor biosynthesis. Transfers the second mannose to the glycosylphosphatidylinositol during GPI precursor assembly. This Eremothecium gossypii (strain ATCC 10895 / CBS 109.51 / FGSC 9923 / NRRL Y-1056) (Yeast) protein is GPI mannosyltransferase 2 (GPI18).